The primary structure comprises 1339 residues: Transcription factor tau subunit sfc3 (1339 aa).

Residues 470-515 (MESNAEVSPDGMTLLPRKRGRPRKSANISVTSSPIRPSKNENNLPS) form a disordered region. Positions 485–497 (PRKRGRPRKSANI) form a DNA-binding region, a.T hook. The segment covering 495-514 (ANISVTSSPIRPSKNENNLP) has biased composition (polar residues). Phosphoserine is present on residues Ser-595 and Ser-596. A disordered region spans residues 791–826 (RRKSMPAEIKRHKESSETKPVDKEEVKKNEKEKDDP). Over residues 798-826 (EIKRHKESSETKPVDKEEVKKNEKEKDDP) the composition is skewed to basic and acidic residues.

In terms of assembly, component of the TFIIIC complex including sfc1, sfc3, sfc4, sfc6 and sfc7. The subunits are organized in two globular domains, tauA and tauB, connected by a proteolysis-sensitive and flexible linker. Interacts with sfc1, sfc4 and sfc6.

It is found in the nucleus envelope. In terms of biological role, TFIIIC mediates tRNA and 5S RNA gene activation by binding to intragenic promoter elements. Upstream of the transcription start site, TFIIIC assembles the initiation complex TFIIIB-TFIIIC-tDNA, which is sufficient for RNA polymerase III recruitment and function. Part of the tauB domain of TFIIIC that binds boxB DNA promoter sites of tRNA and similar genes. Cooperates with sfc6 in DNA binding. Localizes to chromatin insulator sequence without recruiting RNA polymerase III and plays a role in nuclear organization. The sequence is that of Transcription factor tau subunit sfc3 from Schizosaccharomyces pombe (strain 972 / ATCC 24843) (Fission yeast).